We begin with the raw amino-acid sequence, 118 residues long: MNAYELQALRHIFAMTIDECATWIAQTGDSESWRQWENGKCAIPDRVVEQLLAMRQQRKKHLHAIIEKINNRIGNNTMRFFPDLTAFQRVYPDGNFIDWKIYQSVAAELYAHDLERLC.

This is an uncharacterized protein from Escherichia coli (strain K12).